A 276-amino-acid polypeptide reads, in one-letter code: NH(3)-dependent NAD(+) synthetase (276 aa).

An ATP-binding site is contributed by 43–50 (GISGGVDS). Residue aspartate 49 participates in Mg(2+) binding. Arginine 146 serves as a coordination point for deamido-NAD(+). Threonine 166 contacts ATP. Glutamate 171 is a binding site for Mg(2+). Lysine 179 and aspartate 186 together coordinate deamido-NAD(+). ATP-binding residues include lysine 195 and threonine 217. Position 266-267 (266-267 (HK)) interacts with deamido-NAD(+).

It belongs to the NAD synthetase family. Homodimer.

It catalyses the reaction deamido-NAD(+) + NH4(+) + ATP = AMP + diphosphate + NAD(+) + H(+). It participates in cofactor biosynthesis; NAD(+) biosynthesis; NAD(+) from deamido-NAD(+) (ammonia route): step 1/1. Its function is as follows. Catalyzes the ATP-dependent amidation of deamido-NAD to form NAD. Uses ammonia as a nitrogen source. In Shewanella frigidimarina (strain NCIMB 400), this protein is NH(3)-dependent NAD(+) synthetase.